We begin with the raw amino-acid sequence, 138 residues long: uncharacterized protein (138 aa).

Residues 19 to 40 (ECKVSVISFFLLAFLLMAHIWL) form a helical membrane-spanning segment. 3 consecutive repeat copies span residues 94 to 106 (KGEIEGKEEKKEG), 107 to 119 (KGEIEGKEEKKEG), and 120 to 132 (KGEIEGKEEKKEV). A 3 X 13 AA tandem repeats of K-G-E-I-E-G-K-E-E-K-K-E-[GV] region spans residues 94–132 (KGEIEGKEEKKEGKGEIEGKEEKKEGKGEIEGKEEKKEV). A disordered region spans residues 98-138 (EGKEEKKEGKGEIEGKEEKKEGKGEIEGKEEKKEVENGPRK).

As to expression, expressed in roots, leaves and flowers.

The protein resides in the mitochondrion membrane. Its function is as follows. Involved in cytoplasmic male sterility (CMS) by leading to pollen abortion. Not expressed in fertile (normal) plants. This is an uncharacterized protein from Raphanus sativus (Radish).